Reading from the N-terminus, the 358-residue chain is UDP-N-acetylglucosamine--N-acetylmuramyl-(pentapeptide) pyrophosphoryl-undecaprenol N-acetylglucosamine transferase (358 aa).

UDP-N-acetyl-alpha-D-glucosamine is bound by residues Ser-196 and Gln-287.

This sequence belongs to the glycosyltransferase 28 family. MurG subfamily.

Its subcellular location is the cell membrane. The catalysed reaction is Mur2Ac(oyl-L-Ala-gamma-D-Glu-L-Lys-D-Ala-D-Ala)-di-trans,octa-cis-undecaprenyl diphosphate + UDP-N-acetyl-alpha-D-glucosamine = beta-D-GlcNAc-(1-&gt;4)-Mur2Ac(oyl-L-Ala-gamma-D-Glu-L-Lys-D-Ala-D-Ala)-di-trans,octa-cis-undecaprenyl diphosphate + UDP + H(+). It functions in the pathway cell wall biogenesis; peptidoglycan biosynthesis. In terms of biological role, cell wall formation. Catalyzes the transfer of a GlcNAc subunit on undecaprenyl-pyrophosphoryl-MurNAc-pentapeptide (lipid intermediate I) to form undecaprenyl-pyrophosphoryl-MurNAc-(pentapeptide)GlcNAc (lipid intermediate II). The chain is UDP-N-acetylglucosamine--N-acetylmuramyl-(pentapeptide) pyrophosphoryl-undecaprenol N-acetylglucosamine transferase from Streptococcus uberis (strain ATCC BAA-854 / 0140J).